We begin with the raw amino-acid sequence, 199 residues long: Protein-methionine-sulfoxide reductase heme-binding subunit MsrQ (199 aa).

4 helical membrane-spanning segments follow: residues 10 to 30 (WLKV…FWAI), 82 to 102 (LWCF…ELGI), 116 to 136 (PYLT…LTST), and 153 to 173 (VVYL…KILS).

Belongs to the MsrQ family. As to quaternary structure, heterodimer of a catalytic subunit (MsrP) and a heme-binding subunit (MsrQ). FMN is required as a cofactor. It depends on heme b as a cofactor.

It is found in the cell inner membrane. In terms of biological role, part of the MsrPQ system that repairs oxidized periplasmic proteins containing methionine sulfoxide residues (Met-O), using respiratory chain electrons. Thus protects these proteins from oxidative-stress damage caused by reactive species of oxygen and chlorine generated by the host defense mechanisms. MsrPQ is essential for the maintenance of envelope integrity under bleach stress, rescuing a wide series of structurally unrelated periplasmic proteins from methionine oxidation, including the primary periplasmic chaperone SurA and the lipoprotein Pal. MsrQ provides electrons for reduction to the reductase catalytic subunit MsrP, using the quinone pool of the respiratory chain. This Salmonella enteritidis PT4 (strain P125109) protein is Protein-methionine-sulfoxide reductase heme-binding subunit MsrQ.